We begin with the raw amino-acid sequence, 260 residues long: Octanoyltransferase (260 aa).

Residues 42–241 enclose the BPL/LPL catalytic domain; it reads PQVPDGLLLL…SFCQVFGLQA (200 aa). Substrate-binding positions include 97–104, 172–174, and 185–187; these read RGGEVTYH, AIG, and GFA. Cysteine 203 acts as the Acyl-thioester intermediate in catalysis.

This sequence belongs to the LipB family.

Its subcellular location is the cytoplasm. It carries out the reaction octanoyl-[ACP] + L-lysyl-[protein] = N(6)-octanoyl-L-lysyl-[protein] + holo-[ACP] + H(+). The protein operates within protein modification; protein lipoylation via endogenous pathway; protein N(6)-(lipoyl)lysine from octanoyl-[acyl-carrier-protein]: step 1/2. In terms of biological role, catalyzes the transfer of endogenously produced octanoic acid from octanoyl-acyl-carrier-protein onto the lipoyl domains of lipoate-dependent enzymes. Lipoyl-ACP can also act as a substrate although octanoyl-ACP is likely to be the physiological substrate. The polypeptide is Octanoyltransferase (Synechococcus sp. (strain JA-3-3Ab) (Cyanobacteria bacterium Yellowstone A-Prime)).